Reading from the N-terminus, the 142-residue chain is Prefoldin subunit alpha 2 (142 aa).

Belongs to the prefoldin subunit alpha family. Heterohexamer of two alpha and four beta subunits.

Its subcellular location is the cytoplasm. Functionally, molecular chaperone capable of stabilizing a range of proteins. Seems to fulfill an ATP-independent, HSP70-like function in archaeal de novo protein folding. This chain is Prefoldin subunit alpha 2, found in Thermococcus kodakarensis (strain ATCC BAA-918 / JCM 12380 / KOD1) (Pyrococcus kodakaraensis (strain KOD1)).